The sequence spans 574 residues: Cholinesterase (574 aa).

An N-linked (GlcNAc...) asparagine glycan is attached at N57. C65 and C92 are disulfide-bonded. A glycan (N-linked (GlcNAc...) asparagine) is linked at N106. 116–117 (GG) provides a ligand contact to substrate. S198 serves as the catalytic Acyl-ester intermediate. The residue at position 198 (S198) is a Phosphoserine. N-linked (GlcNAc...) asparagine glycans are attached at residues N241 and N256. A disulfide bond links C252 and C263. E325 serves as the catalytic Charge relay system. An N-linked (GlcNAc...) asparagine glycan is attached at N341. A disulfide bridge links C400 with C519. Residue H438 is the Charge relay system of the active site. N-linked (GlcNAc...) asparagine glycosylation is found at N455, N481, and N486.

It belongs to the type-B carboxylesterase/lipase family. As to quaternary structure, homotetramer; disulfide-linked. Dimer of dimers. As to expression, detected in blood plasma (at protein level). Present in most cells except erythrocytes.

The protein resides in the secreted. It carries out the reaction an acylcholine + H2O = a carboxylate + choline + H(+). Esterase with broad substrate specificity. Contributes to the inactivation of the neurotransmitter acetylcholine. Can degrade neurotoxic organophosphate esters. The polypeptide is Cholinesterase (BCHE) (Equus caballus (Horse)).